A 414-amino-acid chain; its full sequence is Adenylosuccinate synthetase (414 aa).

GTP contacts are provided by residues 12–18 (GDEGKGK) and 40–42 (GHT). Aspartate 13 functions as the Proton acceptor in the catalytic mechanism. Positions 13 and 40 each coordinate Mg(2+). IMP is bound by residues 13 to 16 (DEGK), 38 to 41 (NAGH), threonine 124, arginine 138, glutamine 216, threonine 231, and arginine 297. Histidine 41 serves as the catalytic Proton donor. Substrate is bound at residue 293–299 (STTGRPR). Residues arginine 299, 325-327 (KLD), and 403-405 (STG) each bind GTP.

Belongs to the adenylosuccinate synthetase family. As to quaternary structure, homodimer. It depends on Mg(2+) as a cofactor.

Its subcellular location is the cytoplasm. The enzyme catalyses IMP + L-aspartate + GTP = N(6)-(1,2-dicarboxyethyl)-AMP + GDP + phosphate + 2 H(+). It participates in purine metabolism; AMP biosynthesis via de novo pathway; AMP from IMP: step 1/2. Plays an important role in the de novo pathway of purine nucleotide biosynthesis. Catalyzes the first committed step in the biosynthesis of AMP from IMP. The sequence is that of Adenylosuccinate synthetase from Hydrogenobaculum sp. (strain Y04AAS1).